A 321-amino-acid polypeptide reads, in one-letter code: Protein APA1 (321 aa).

Residues 50–70 (SLIEKPERGQTPEGEDPLGKP) are disordered. Substrate is bound at residue lysine 54. The residue at position 60 (threonine 60) is a Phosphothreonine. Residues 93–94 (NK), asparagine 145, and 151–154 (GSSL) contribute to the substrate site. Catalysis depends on histidine 158, which acts as the Nucleophile. Residues glutamine 160, 273-275 (NST), methionine 280, and lysine 284 contribute to the substrate site.

It belongs to the ATP adenylyltransferase family. As to quaternary structure, monomer. A divalent metal cation serves as cofactor. Post-translationally, the N-terminus is blocked.

The protein resides in the cytoplasm. Its subcellular location is the nucleus. The enzyme catalyses ADP + ATP + H(+) = P(1),P(4)-bis(5'-adenosyl) tetraphosphate + phosphate. It catalyses the reaction sulfate + ADP + H(+) = adenosine 5'-phosphosulfate + phosphate. In terms of biological role, ap4A phosphorylase catalyzes the phosphorolytic degradation of bis(5'-adenosyl) tetraphosphate (Ap4A) into ADP and ATP. Can also use other Np4N' nucleotides (where N and N' stand for A,C,G or U) as substrates with equal efficiency. Cannot catalyze the reverse reaction. Additionally, this enzyme can also catalyze the phosphorolytic degradation of adenosine 5'-phosphosulfate (AMPS) into ADP and sulfate, the reversible exchange reaction between inorganic phosphate and the beta-phosphate of a nucleoside diphosphate (NDP), and the synthesis of Ap4A from AMPS plus ATP. This is Protein APA1 from Saccharomyces cerevisiae (strain ATCC 204508 / S288c) (Baker's yeast).